We begin with the raw amino-acid sequence, 466 residues long: cAMP-dependent protein kinase regulatory subunit (466 aa).

The dimerization and phosphorylation stretch occupies residues 25–231 (QFAANYFTKR…RLEKAVGKNF (207 aa)). Residues 71 to 80 (ASLSHGSSKA) are compositionally biased toward low complexity. 4 disordered regions span residues 71 to 90 (ASLSHGSSKANASQSGISSS), 109 to 139 (STHIVDHLDSTHSNTTASPAKASGGDAPGIF), 154 to 179 (NSSVDPMAPEPTATTHSFPRRSVVNP), and 193 to 218 (SVSGETLQPDHLDDWKPENFQEKSPE). Positions 81 to 90 (NASQSGISSS) are enriched in polar residues. Positions 109-118 (STHIVDHLDS) are enriched in basic and acidic residues. S193 bears the Phosphoserine mark. Over residues 200-218 (QPDHLDDWKPENFQEKSPE) the composition is skewed to basic and acidic residues. Residues 232-347 (LFNK…LLKN), E297, R306, 350-466 (ILKS…RSKH), E416, and R425 contribute to the 3',5'-cyclic AMP site.

The protein belongs to the cAMP-dependent kinase regulatory chain family. In terms of assembly, tetramer, composed of 2 regulatory (R) and 2 catalytic (C) subunits. In the presence of cAMP it dissociates into 2 active monomeric C subunits and an R dimer.

In Kluyveromyces lactis (strain ATCC 8585 / CBS 2359 / DSM 70799 / NBRC 1267 / NRRL Y-1140 / WM37) (Yeast), this protein is cAMP-dependent protein kinase regulatory subunit (PKAR).